Reading from the N-terminus, the 465-residue chain is Alpha-2A adrenergic receptor (465 aa).

At 1-48 (MFRQEQPLAEGSFAPMGSLQPDAGNASWNGTEAPGGGARATPYSLQVT) the chain is on the extracellular side. N-linked (GlcNAc...) asparagine glycans are attached at residues asparagine 25 and asparagine 29. Residues 49-74 (LTLVCLAGLLMLLTVFGNVLVIIAVF) form a helical membrane-spanning segment. Residues 75–85 (TSRALKAPQNL) lie on the Cytoplasmic side of the membrane. Residues 86–111 (FLVSLASADILVATLVIPFSLANEVM) form a helical membrane-spanning segment. Topologically, residues 112 to 121 (GYWYFGKAWC) are extracellular. An intrachain disulfide couples cysteine 121 to cysteine 203. The chain crosses the membrane as a helical span at residues 122–144 (EIYLALDVLFCTSSIVHLCAISL). Over 145–166 (DRYWSITQAIEYNLKRTPRRIK) the chain is Cytoplasmic. Residues 167 to 187 (AIIITVWVISAVISFPPLISI) form a helical membrane-spanning segment. The Extracellular portion of the chain corresponds to 188–209 (EKKGGGGGPQPAEPRCEINDQK). A helical transmembrane segment spans residues 210 to 232 (WYVISSCIGSFFAPCLIMILVYV). Residues 233-389 (RIYQIAKRRT…RQNREKRFTF (157 aa)) are Cytoplasmic-facing. The segment at 242–368 (TRVPPSRRGP…TPAAGPGEER (127 aa)) is disordered. Residues 313–330 (SSDHAERPPGPRRPERGP) show a composition bias toward basic and acidic residues. A Phosphoserine modification is found at serine 346. Omega-N-methylarginine is present on arginine 368. The chain crosses the membrane as a helical span at residues 390–410 (VLAVVIGVFVVCWFPFFFTYT). The Extracellular portion of the chain corresponds to 411–424 (LTAVGCSVPRTLFK). Residues 425-444 (FFFWFGYCNSSLNPVIYTIF) form a helical membrane-spanning segment. Over 445–465 (NHDFRRAFKKILCRGDRKRIV) the chain is Cytoplasmic. Cysteine 457 carries S-palmitoyl cysteine lipidation.

Belongs to the G-protein coupled receptor 1 family. Adrenergic receptor subfamily. ADRA2A sub-subfamily.

Its subcellular location is the cell membrane. Its function is as follows. Alpha-2 adrenergic receptors mediate the catecholamine-induced inhibition of adenylate cyclase through the action of G proteins. The rank order of potency for agonists of this receptor is oxymetazoline &gt; clonidine &gt; epinephrine &gt; norepinephrine &gt; phenylephrine &gt; dopamine &gt; p-synephrine &gt; p-tyramine &gt; serotonin = p-octopamine. For antagonists, the rank order is yohimbine &gt; phentolamine = mianserine &gt; chlorpromazine = spiperone = prazosin &gt; propanolol &gt; alprenolol = pindolol. In Homo sapiens (Human), this protein is Alpha-2A adrenergic receptor.